Reading from the N-terminus, the 262-residue chain is Shikimate dehydrogenase (NADP(+)) (262 aa).

Shikimate-binding positions include 15–17 (SRS) and T62. K66 acts as the Proton acceptor in catalysis. Position 78 (E78) interacts with NADP(+). N87 and D102 together coordinate shikimate. NADP(+)-binding positions include 126–130 (GAGGA), 150–155 (NRTLAR), and M214. Y216 provides a ligand contact to shikimate. Residue G236 coordinates NADP(+).

The protein belongs to the shikimate dehydrogenase family. As to quaternary structure, homodimer.

The enzyme catalyses shikimate + NADP(+) = 3-dehydroshikimate + NADPH + H(+). It functions in the pathway metabolic intermediate biosynthesis; chorismate biosynthesis; chorismate from D-erythrose 4-phosphate and phosphoenolpyruvate: step 4/7. In terms of biological role, involved in the biosynthesis of the chorismate, which leads to the biosynthesis of aromatic amino acids. Catalyzes the reversible NADPH linked reduction of 3-dehydroshikimate (DHSA) to yield shikimate (SA). The chain is Shikimate dehydrogenase (NADP(+)) from Acinetobacter baumannii (strain AB307-0294).